We begin with the raw amino-acid sequence, 88 residues long: Protein GOLVEN 10 (88 aa).

A signal peptide spans 1-22; the sequence is MSSIHVASMILLLFLFLHHSDS. Residues 23 to 75 constitute a propeptide that is removed on maturation; sequence RHLDNVHITASRFSLVKDQNVVSSSTSKEPVKVSRFVPGPLKHHHRRPPLLFA. Residues 44–88 form a disordered region; that stretch reads VSSSTSKEPVKVSRFVPGPLKHHHRRPPLLFADYPKPSTRPPRHN. Tyr-77 carries the post-translational modification Sulfotyrosine. Pro-85 is modified (hydroxyproline).

Belongs to the RGF family. As to quaternary structure, binds to LRR receptor-like serine/threonine-protein kinases RGI1, RGI2 and RGI3 to trigger their dimerization with SERK proteins and subsequent signaling. Expressed in roots, shoots, leaves and flowers.

Its subcellular location is the secreted. It localises to the endoplasmic reticulum. Signaling peptide (root growth factor) that maintains the postembryonic root stem cell niche. Regulates the pattern of root growth and lateral root development by modulating the length and the number of cortical cells in the root apical meristem (RAM), and the anticlinal asymmetric cell divisions in lateral root initiation cells. The protein is Protein GOLVEN 10 of Arabidopsis thaliana (Mouse-ear cress).